The sequence spans 471 residues: Ribulose bisphosphate carboxylase large chain 2 (471 aa).

Substrate-binding residues include Asn-116 and Thr-166. Catalysis depends on Lys-168, which acts as the Proton acceptor. Lys-170 is a substrate binding site. Mg(2+) is bound by residues Lys-194, Asp-196, and Glu-197. Position 194 is an N6-carboxylysine (Lys-194). His-287 functions as the Proton acceptor in the catalytic mechanism. Residues Arg-288, His-320, and Ser-372 each contribute to the substrate site.

This sequence belongs to the RuBisCO large chain family. Type I subfamily. In terms of assembly, heterohexadecamer of 8 large chains and 8 small chains. Requires Mg(2+) as cofactor.

The protein localises to the carboxysome. It catalyses the reaction 2 (2R)-3-phosphoglycerate + 2 H(+) = D-ribulose 1,5-bisphosphate + CO2 + H2O. The enzyme catalyses D-ribulose 1,5-bisphosphate + O2 = 2-phosphoglycolate + (2R)-3-phosphoglycerate + 2 H(+). Its function is as follows. RuBisCO catalyzes two reactions: the carboxylation of D-ribulose 1,5-bisphosphate, the primary event in carbon dioxide fixation, as well as the oxidative fragmentation of the pentose substrate. Both reactions occur simultaneously and in competition at the same active site. This Hydrogenovibrio marinus protein is Ribulose bisphosphate carboxylase large chain 2.